The following is a 168-amino-acid chain: Large ribosomal subunit protein uL5 (168 aa).

The protein belongs to the universal ribosomal protein uL5 family. Part of the 50S ribosomal subunit; contacts the 5S rRNA and probably tRNA. Forms a bridge to the 30S subunit in the 70S ribosome.

Functionally, this is one of the proteins that bind and probably mediate the attachment of the 5S RNA into the large ribosomal subunit, where it forms part of the central protuberance. In the 70S ribosome it contacts protein S13 of the 30S subunit (bridge B1b), connecting the 2 subunits; this bridge is implicated in subunit movement. May contact the P site tRNA; the 5S rRNA and some of its associated proteins might help stabilize positioning of ribosome-bound tRNAs. The protein is Large ribosomal subunit protein uL5 of Methanosphaera stadtmanae (strain ATCC 43021 / DSM 3091 / JCM 11832 / MCB-3).